The chain runs to 242 residues: Small ribosomal subunit protein eS4 (242 aa).

In terms of domain architecture, S4 RNA-binding spans 43–106; sequence LPLMIIVRDI…GDVYRVLPDE (64 aa).

The protein belongs to the eukaryotic ribosomal protein eS4 family.

The sequence is that of Small ribosomal subunit protein eS4 (rps4e) from Methanothermobacter thermautotrophicus (strain ATCC 29096 / DSM 1053 / JCM 10044 / NBRC 100330 / Delta H) (Methanobacterium thermoautotrophicum).